A 390-amino-acid chain; its full sequence is Zinc finger CCCH domain-containing protein 46 (390 aa).

The C3H1-type zinc-finger motif lies at 2–29; it reads SRRQEICRNFQRGSCKYGAQCRYLHASP. The segment at 27–129 is disordered; that stretch reads ASPHQQQQQQ…AAHTSCEDPQ (103 aa). Residues 48–76 show a composition bias toward low complexity; that stretch reads GSRQQQQPSFGSQFQQQQQQQQKPNPFGF. Polar residues predominate over residues 106–129; that stretch reads PTKQTEAVQPPQAQAAHTSCEDPQ. Residues 146–211 are required for transcriptional activation activity; the sequence is WKLTCYAHLR…FTNLLNSARP (66 aa). Residues 230-248 are compositionally biased toward polar residues; the sequence is SSFGASQTNGPPVFSSFSQ. The tract at residues 230–284 is disordered; it reads SSFGASQTNGPPVFSSFSQIGAATNIGPGPGTTAPGMPASSPFGHPSSAPLAAPT. The segment covering 250 to 268 has biased composition (low complexity); the sequence is GAATNIGPGPGTTAPGMPA.

Interacts with GSK1 and GSK4. Phosphorylated on serine and threonine residues by GSK1. Phosphorylation represses nuclear localization. As to expression, expressed in the adaxial face of the collar, nodes and the basal region of elongating internodes.

The protein localises to the nucleus. Its subcellular location is the cytoplasm. Its function is as follows. Transcriptional activator that binds double-stranded DNA and the single-stranded RNA polymers poly(rA), poly(rU) and poly(rG), but not poly(rC). Mediates optimal plant architecture through brassinosteroid (BR) signaling. May act as a negative regulator in sterol homeostasis. Acts as a negative regulator of BR signaling. Binds to the specific DNA sequence 5'-CTCGC-3' of BZR1 promoter and negatively regulates BZR1. Acts as an antagonistic transcription factor of BZR1 to attenuate the BR signaling pathway and regulate leaf bending. Represses the expression of ILI1, and activates that of IBH1 to balance the regulation activity of BZR1. This Oryza sativa subsp. japonica (Rice) protein is Zinc finger CCCH domain-containing protein 46.